Here is a 501-residue protein sequence, read N- to C-terminus: Ribose import ATP-binding protein RbsA (501 aa).

ABC transporter domains follow at residues 5 to 241 (LQLK…VGRK) and 252 to 495 (APGD…VGKL). An ATP-binding site is contributed by 37-44 (GENGAGKS).

This sequence belongs to the ABC transporter superfamily. Ribose importer (TC 3.A.1.2.1) family. As to quaternary structure, the complex is composed of an ATP-binding protein (RbsA), two transmembrane proteins (RbsC) and a solute-binding protein (RbsB).

The protein resides in the cell inner membrane. The enzyme catalyses D-ribose(out) + ATP + H2O = D-ribose(in) + ADP + phosphate + H(+). In terms of biological role, part of the ABC transporter complex RbsABC involved in ribose import. Responsible for energy coupling to the transport system. The protein is Ribose import ATP-binding protein RbsA of Escherichia coli (strain K12).